Here is a 529-residue protein sequence, read N- to C-terminus: Chromosomal replication initiator protein DnaA (529 aa).

The interval 1-72 is domain I, interacts with DnaA modulators; that stretch reads MQDFWHAASA…SLACDYWEAT (72 aa). The segment at 72–192 is domain II; it reads TVDVQFVLDP…HVDDSVHERS (121 aa). The domain III, AAA+ region stretch occupies residues 193–409; sequence RLNQILTFDN…GALRKILAYS (217 aa). ATP-binding residues include Gly237, Gly239, Lys240, and Thr241. Residues 410-529 form a domain IV, binds dsDNA region; that stretch reads NFHGKEITIE…LHVLEQTLKG (120 aa).

Belongs to the DnaA family. As to quaternary structure, oligomerizes as a right-handed, spiral filament on DNA at oriC.

It is found in the cytoplasm. Functionally, plays an essential role in the initiation and regulation of chromosomal replication. ATP-DnaA binds to the origin of replication (oriC) to initiate formation of the DNA replication initiation complex once per cell cycle. Binds the DnaA box (a 9 base pair repeat at the origin) and separates the double-stranded (ds)DNA. Forms a right-handed helical filament on oriC DNA; dsDNA binds to the exterior of the filament while single-stranded (ss)DNA is stabiized in the filament's interior. The ATP-DnaA-oriC complex binds and stabilizes one strand of the AT-rich DNA unwinding element (DUE), permitting loading of DNA polymerase. After initiation quickly degrades to an ADP-DnaA complex that is not apt for DNA replication. Binds acidic phospholipids. The protein is Chromosomal replication initiator protein DnaA of Ralstonia pickettii (strain 12J).